The following is a 258-amino-acid chain: Retron Ec83 putative HNH endonuclease (258 aa).

Functionally, putative HNH endonuclease component of antiviral defense system retron Ec83, composed of a non-coding RNA (ncRNA), a reverse transcriptase (RT), a probable ATPase and this protein. Expression of retron Ec78 confers protection against bacteriophage T2, T4 and T6. At multiplicity of infection (MOI) of 0.02 cultures slow growth when infected with T4 but do not collapse, at MOI 2 cultures enter growth stasis. This is Retron Ec83 putative HNH endonuclease from Escherichia coli.